A 2211-amino-acid polypeptide reads, in one-letter code: Nonribosomal peptide synthetase 13 (2211 aa).

Residues 76-475 (TYAELDSLSD…IEHHLQLTLP (400 aa)) are adenylation 1. The Carrier 1 domain occupies 594–671 (PPSTPKEATI…EQSKRAGLIQ (78 aa)). Ser-631 is subject to O-(pantetheine 4'-phosphoryl)serine. A condensation 1 region spans residues 710–975 (EDIYPCTALQ…IATVPTRIRV (266 aa)). The interval 1169-1563 (TYRELWAHSS…LGAVEASVMR (395 aa)) is adenylation 2. The Carrier 2 domain maps to 1677-1756 (PMSDDNERRL…RSRHLITEQA (80 aa)). An O-(pantetheine 4'-phosphoryl)serine modification is found at Ser-1714. The tract at residues 1814–2069 (HFQFDLSGAV…CTNYIPYRLS (256 aa)) is condensation 2.

This sequence belongs to the NRP synthetase family.

The catalysed reaction is L-proline + L-tryptophan + 2 ATP = brevianamide F + 2 AMP + 2 diphosphate + 2 H(+). Its pathway is mycotoxin biosynthesis. Nonribosomal peptide synthetase; part of the gene cluster that mediates the biosynthesis of fumitremorgins, indole alkaloids that carry not only intriguing chemical structures, but also interesting biological and pharmacological activities. The biosynthesis of fumitremorgin-type alkaloids begins by condensation of the two amino acids L-tryptophan and L-proline to brevianamide F, catalyzed by the non-ribosomal peptide synthetase ftmA. Brevianamide F is then prenylated by the prenyltransferase ftmPT1/ftmB in the presence of dimethylallyl diphosphate, resulting in the formation of tryprostatin B. The three cytochrome P450 monooxygenases, ftmP450-1/ftmC, ftmP450-2/ftmE and ftmP450-3/FtmG, are responsible for the conversion of tryprostatin B to 6-hydroxytryprostatin B, tryprostatin A to fumitremorgin C and fumitremorgin C to 12,13-dihydroxyfumitremorgin C, respectively. The putative methyltransferase ftmMT/ftmD is expected for the conversion of 6-hydroxytryprostatin B to tryprostatin A. FtmPT2/FtmH catalyzes the prenylation of 12,13-dihydroxyfumitre-morgin C in the presence of dimethylallyl diphosphate, resulting in the formation of fumitremorgin B. Fumitremorgin B is further converted to verruculogen by ftmOx1/ftmF via the insertion of an endoperoxide bond between the two prenyl moieties. In some fungal species, verruculogen is further converted to fumitremorgin A, but the enzymes involved in this step have not been identified yet. The polypeptide is Nonribosomal peptide synthetase 13 (Aspergillus fumigatus (Neosartorya fumigata)).